Reading from the N-terminus, the 84-residue chain is MYB-like transcription factor TCL1 (84 aa).

The Myb-like domain occupies 36-73 (TEQEEDLIFRMYRLVGDRWDLIARRVVGREAKEIERYW).

As to expression, expressed in inflorescences and trichomes of rosette and cauline leaves.

Its subcellular location is the nucleus. In terms of biological role, MYB-type transcription factor involved in trichome cell specification. Acts as a negative regulator of trichome patterning and formation by direct binding to the cis-acting regulatory elements of GL1, thus suppressing the expression of GL1. The polypeptide is MYB-like transcription factor TCL1 (TCL1) (Arabidopsis thaliana (Mouse-ear cress)).